We begin with the raw amino-acid sequence, 275 residues long: Putative phosphoenolpyruvate synthase regulatory protein (275 aa).

157–164 (GVSRCGKT) is a binding site for ADP.

The protein belongs to the pyruvate, phosphate/water dikinase regulatory protein family. PSRP subfamily.

The enzyme catalyses [pyruvate, water dikinase] + ADP = [pyruvate, water dikinase]-phosphate + AMP + H(+). It catalyses the reaction [pyruvate, water dikinase]-phosphate + phosphate + H(+) = [pyruvate, water dikinase] + diphosphate. Bifunctional serine/threonine kinase and phosphorylase involved in the regulation of the phosphoenolpyruvate synthase (PEPS) by catalyzing its phosphorylation/dephosphorylation. The polypeptide is Putative phosphoenolpyruvate synthase regulatory protein (Bordetella pertussis (strain Tohama I / ATCC BAA-589 / NCTC 13251)).